A 162-amino-acid chain; its full sequence is Succinate dehydrogenase assembly factor 2-A, mitochondrial (162 aa).

This sequence belongs to the SDHAF2 family. In terms of assembly, interacts with the flavoprotein subunit within the SDH catalytic dimer.

It localises to the mitochondrion matrix. Its function is as follows. Plays an essential role in the assembly of succinate dehydrogenase (SDH), an enzyme complex (also referred to as respiratory complex II) that is a component of both the tricarboxylic acid (TCA) cycle and the mitochondrial electron transport chain, and which couples the oxidation of succinate to fumarate with the reduction of ubiquinone (coenzyme Q) to ubiquinol. Required for flavinylation (covalent attachment of FAD) of the flavoprotein subunit of the SDH catalytic dimer. This chain is Succinate dehydrogenase assembly factor 2-A, mitochondrial, found in Drosophila yakuba (Fruit fly).